A 565-amino-acid chain; its full sequence is Proline--tRNA ligase (565 aa).

The protein belongs to the class-II aminoacyl-tRNA synthetase family. ProS type 1 subfamily. Homodimer.

Its subcellular location is the cytoplasm. The catalysed reaction is tRNA(Pro) + L-proline + ATP = L-prolyl-tRNA(Pro) + AMP + diphosphate. In terms of biological role, catalyzes the attachment of proline to tRNA(Pro) in a two-step reaction: proline is first activated by ATP to form Pro-AMP and then transferred to the acceptor end of tRNA(Pro). As ProRS can inadvertently accommodate and process non-cognate amino acids such as alanine and cysteine, to avoid such errors it has two additional distinct editing activities against alanine. One activity is designated as 'pretransfer' editing and involves the tRNA(Pro)-independent hydrolysis of activated Ala-AMP. The other activity is designated 'posttransfer' editing and involves deacylation of mischarged Ala-tRNA(Pro). The misacylated Cys-tRNA(Pro) is not edited by ProRS. The protein is Proline--tRNA ligase of Campylobacter lari (strain RM2100 / D67 / ATCC BAA-1060).